The sequence spans 127 residues: Large ribosomal subunit protein bL17 (127 aa).

Belongs to the bacterial ribosomal protein bL17 family. Part of the 50S ribosomal subunit. Contacts protein L32.

This Pediococcus pentosaceus (strain ATCC 25745 / CCUG 21536 / LMG 10740 / 183-1w) protein is Large ribosomal subunit protein bL17.